Reading from the N-terminus, the 130-residue chain is Seminal plasma protein pB1 (130 aa).

Positions 1-25 (MAPRLGIFLLWAGVSVFLPLDPVNG) are cleaved as a signal peptide. Fibronectin type-II domains lie at 39–83 (TSDD…YCRS) and 84–130 (TDYA…WRYC). 4 disulfide bridges follow: Cys44-Cys68, Cys58-Cys81, Cys89-Cys115, and Cys103-Cys130.

The protein belongs to the seminal plasma protein family. Component of seminal plasma.

It localises to the secreted. In terms of biological role, may form a complex with spermadhesin AQN-1 which possesses phosphorylcholine-binding activity. This Sus scrofa (Pig) protein is Seminal plasma protein pB1.